The following is a 314-amino-acid chain: Lipoyl synthase (314 aa).

7 residues coordinate [4Fe-4S] cluster: C55, C60, C66, C81, C85, C88, and S292. In terms of domain architecture, Radical SAM core spans 67–281 (WEDREATFLI…SAYAEGLGFA (215 aa)).

It belongs to the radical SAM superfamily. Lipoyl synthase family. The cofactor is [4Fe-4S] cluster.

The protein localises to the cytoplasm. It catalyses the reaction [[Fe-S] cluster scaffold protein carrying a second [4Fe-4S](2+) cluster] + N(6)-octanoyl-L-lysyl-[protein] + 2 oxidized [2Fe-2S]-[ferredoxin] + 2 S-adenosyl-L-methionine + 4 H(+) = [[Fe-S] cluster scaffold protein] + N(6)-[(R)-dihydrolipoyl]-L-lysyl-[protein] + 4 Fe(3+) + 2 hydrogen sulfide + 2 5'-deoxyadenosine + 2 L-methionine + 2 reduced [2Fe-2S]-[ferredoxin]. It participates in protein modification; protein lipoylation via endogenous pathway; protein N(6)-(lipoyl)lysine from octanoyl-[acyl-carrier-protein]: step 2/2. Catalyzes the radical-mediated insertion of two sulfur atoms into the C-6 and C-8 positions of the octanoyl moiety bound to the lipoyl domains of lipoate-dependent enzymes, thereby converting the octanoylated domains into lipoylated derivatives. This is Lipoyl synthase from Mycolicibacterium smegmatis (strain ATCC 700084 / mc(2)155) (Mycobacterium smegmatis).